We begin with the raw amino-acid sequence, 325 residues long: Elongation factor P--(R)-beta-lysine ligase (325 aa).

Position 76–78 (serine 76–glutamate 78) interacts with substrate. ATP is bound by residues arginine 100 to glutamate 102 and asparagine 109. Tyrosine 118 is a binding site for substrate. ATP is bound at residue glutamate 244–leucine 245. Substrate is bound at residue glutamate 251. Glycine 300 serves as a coordination point for ATP.

It belongs to the class-II aminoacyl-tRNA synthetase family. EpmA subfamily. Homodimer.

The enzyme catalyses D-beta-lysine + L-lysyl-[protein] + ATP = N(6)-((3R)-3,6-diaminohexanoyl)-L-lysyl-[protein] + AMP + diphosphate + H(+). In terms of biological role, with EpmB is involved in the beta-lysylation step of the post-translational modification of translation elongation factor P (EF-P). Catalyzes the ATP-dependent activation of (R)-beta-lysine produced by EpmB, forming a lysyl-adenylate, from which the beta-lysyl moiety is then transferred to the epsilon-amino group of a conserved specific lysine residue in EF-P. The protein is Elongation factor P--(R)-beta-lysine ligase of Edwardsiella ictaluri (strain 93-146).